The chain runs to 545 residues: Reticulon-2 (545 aa).

Disordered regions lie at residues 1 to 183 and 199 to 250; these read MGQV…ETGE and SPEV…EREP. The segment covering 14–25 has biased composition (low complexity); sequence APSTASSTPDST. A compositionally biased stretch (basic and acidic residues) spans 32 to 43; the sequence is SDFRELHTAREF. Phosphoserine is present on Ser44. Residues 135–146 show a composition bias toward basic and acidic residues; the sequence is RPLEDLRLRLDH. Low complexity predominate over residues 157 to 166; it reads GEDSSTSSST. Residues 199–230 show a composition bias toward polar residues; the sequence is SPEVLTPQLSPGSGTPQAGTPSPSRSRDSNSG. Phosphoserine is present on residues Ser227 and Ser229. Residues 345–545 enclose the Reticulon domain; it reads VADLLYWKDT…AVSGSKAKAE (201 aa). 2 consecutive transmembrane segments (helical) span residues 368–388 and 463–483; these read LLCLLHFSIVSVAAHLALLLL and LLFYILTFVGAIFNGLTLLIL.

Interacts with isoform 1 but not isoform 3 of SPAST. Interacts with BACE1. Interacts (via first transmembrane domain) with ARL6IP5/GTRAP3-18. Interacts (via N-terminus) with SLC1A1/EAAC1; the interaction promotes cell surface expression of SLC1A1. In terms of assembly, interacts with TMEM33. Highly expressed in skeletal muscle.

The protein resides in the endoplasmic reticulum membrane. The protein localises to the sarcoplasmic reticulum membrane. It localises to the cell membrane. It is found in the sarcolemma. Its subcellular location is the T-tubule. The protein resides in the cytoplasm. The protein localises to the myofibril. It localises to the sarcomere. It is found in the z line. Its subcellular location is the cytoskeleton. In terms of biological role, inhibits amyloid precursor protein processing, probably by blocking BACE1 activity. Enhances trafficking of the glutamate transporter SLC1A1/EAAC1 from the endoplasmic reticulum to the cell surface. Plays a role in the translocation of SLC2A4/GLUT4 from intracellular membranes to the cell membrane which facilitates the uptake of glucose into the cell. In Homo sapiens (Human), this protein is Reticulon-2 (RTN2).